Reading from the N-terminus, the 429-residue chain is UDP-N-acetylglucosamine 1-carboxyvinyltransferase (429 aa).

Residue 22–23 (KN) coordinates phosphoenolpyruvate. Arginine 102 is a UDP-N-acetyl-alpha-D-glucosamine binding site. Cysteine 126 functions as the Proton donor in the catalytic mechanism. Cysteine 126 carries the 2-(S-cysteinyl)pyruvic acid O-phosphothioketal modification. UDP-N-acetyl-alpha-D-glucosamine contacts are provided by residues 131 to 135 (RPVDL), aspartate 316, and isoleucine 338.

This sequence belongs to the EPSP synthase family. MurA subfamily.

The protein localises to the cytoplasm. The catalysed reaction is phosphoenolpyruvate + UDP-N-acetyl-alpha-D-glucosamine = UDP-N-acetyl-3-O-(1-carboxyvinyl)-alpha-D-glucosamine + phosphate. The protein operates within cell wall biogenesis; peptidoglycan biosynthesis. Cell wall formation. Adds enolpyruvyl to UDP-N-acetylglucosamine. The chain is UDP-N-acetylglucosamine 1-carboxyvinyltransferase from Afipia carboxidovorans (strain ATCC 49405 / DSM 1227 / KCTC 32145 / OM5) (Oligotropha carboxidovorans).